The sequence spans 341 residues: Methionine import ATP-binding protein MetN (341 aa).

The region spanning 2–237 (IELCGLKKSF…PESLARKMLY (236 aa)) is the ABC transporter domain. 34 to 41 (GKSGAGKS) is an ATP binding site.

This sequence belongs to the ABC transporter superfamily. Methionine importer (TC 3.A.1.24) family. In terms of assembly, the complex is composed of two ATP-binding proteins (MetN), two transmembrane proteins (MetI) and a solute-binding protein (MetQ).

It localises to the cell inner membrane. The catalysed reaction is L-methionine(out) + ATP + H2O = L-methionine(in) + ADP + phosphate + H(+). It catalyses the reaction D-methionine(out) + ATP + H2O = D-methionine(in) + ADP + phosphate + H(+). Part of the ABC transporter complex MetNIQ involved in methionine import. Responsible for energy coupling to the transport system. This chain is Methionine import ATP-binding protein MetN, found in Legionella pneumophila (strain Paris).